A 197-amino-acid polypeptide reads, in one-letter code: UPF0319 protein VP0761 (197 aa).

A signal peptide spans 1 to 20 (MKKTTTLLGICAILSAPAFA).

The protein belongs to the UPF0319 family.

This is UPF0319 protein VP0761 from Vibrio parahaemolyticus serotype O3:K6 (strain RIMD 2210633).